Reading from the N-terminus, the 854-residue chain is Probable inactive serine/threonine-protein kinase DDB_G0274821 (854 aa).

The Protein kinase domain maps to 1 to 266 (MPIKESFKRI…WPKLFIHPFF (266 aa)). N-linked (GlcNAc...) asparagine glycans are attached at residues Asn-32 and Asn-106. Positions 116 to 135 (NNNNNNNNNNNNNNNNNNNN) are disordered. Residues Asn-163, Asn-279, Asn-283, and Asn-290 are each glycosylated (N-linked (GlcNAc...) asparagine). The tract at residues 289 to 331 (LNKSSSSSSSSSSSSSSSSSSSSSSSLSFQQQQQPNNISSPNL) is disordered. Residues 292–322 (SSSSSSSSSSSSSSSSSSSSSSSLSFQQQQQ) show a composition bias toward low complexity. Asn-325, Asn-347, and Asn-365 each carry an N-linked (GlcNAc...) asparagine glycan. The tract at residues 384–408 (IISPNRPSSPPLSSLSSCSSSSSSS) is disordered. Asn-414 carries N-linked (GlcNAc...) asparagine glycosylation. The disordered stretch occupies residues 425 to 446 (NNNNNNNNNNNNNNNNNNNNNN). N-linked (GlcNAc...) asparagine glycans are attached at residues Asn-520, Asn-541, and Asn-620. Residues 627-650 (SSPPPSSSSSSSSPSSPSSTSPSL) form a disordered region. The span at 633–650 (SSSSSSSPSSPSSTSPSL) shows a compositional bias: low complexity. Residue Asn-757 is glycosylated (N-linked (GlcNAc...) asparagine). Residues 770–792 (HWRVQISFLNILFILITINNNFI) traverse the membrane as a helical segment.

It belongs to the protein kinase superfamily. Ser/Thr protein kinase family.

It localises to the membrane. This chain is Probable inactive serine/threonine-protein kinase DDB_G0274821, found in Dictyostelium discoideum (Social amoeba).